The following is an 887-amino-acid chain: Fibroblast growth factor receptor 2 (887 aa).

Positions 1 to 18 (MLNKFIVIVTMLAMWNYA) are cleaved as a signal peptide. Over 19 to 416 (QDCNFELSKN…KDCVGNSYFT (398 aa)) the chain is Extracellular. Ig-like C2-type domains lie at 22-115 (NFEL…EFIS) and 180-260 (VSGS…LRMK). 9 N-linked (GlcNAc...) asparagine glycosylation sites follow: asparagine 28, asparagine 74, asparagine 93, asparagine 230, asparagine 261, asparagine 268, asparagine 328, asparagine 334, and asparagine 364. The cysteines at positions 43 and 104 are disulfide-linked. The Ig-like C2-type 3 domain maps to 297-387 (FNLNSRVCIN…YACRIINFKD (91 aa)). The cysteines at positions 313 and 380 are disulfide-linked. The helical transmembrane segment at 417–437 (IIWYSISVGIIILVVISFLII) threads the bilayer. The Cytoplasmic segment spans residues 438 to 887 (RLYNKYSNGY…SNQCYSTTIV (450 aa)). In terms of domain architecture, Protein kinase spans 585–862 (LIIGSKIGEG…IIDKLTHIQL (278 aa)). Residues 591-599 (IGEGAFGIV) and lysine 619 each bind ATP. Aspartate 728 (proton acceptor) is an active-site residue. Position 757 is a phosphotyrosine; by autocatalysis (tyrosine 757).

Belongs to the protein kinase superfamily. Tyr protein kinase family. Fibroblast growth factor receptor subfamily. As to expression, expressed in brain, stem cells and the mesenchymal cells.

The protein localises to the membrane. The enzyme catalyses L-tyrosyl-[protein] + ATP = O-phospho-L-tyrosyl-[protein] + ADP + H(+). Its function is as follows. Receptor for basic fibroblast growth factor. This Dugesia japonica (Planarian) protein is Fibroblast growth factor receptor 2 (FGFR2).